The sequence spans 85 residues: COMM domain-containing protein 6 (85 aa).

At Met-1 the chain carries N-acetylmethionine. The 68-residue stretch at 18-85 (QLIDFEWKLG…KEIAAIIETV (68 aa)) folds into the COMM domain.

It belongs to the COMM domain-containing protein 6 family. As to quaternary structure, component of the commander complex consisting of the CCC subcomplex and the retriever subcomplex. Component of the CCC (COMMD/CCDC22/CCDC93) subcomplex consisting of COMMD1, COMMD2, COMMD3, COMMD4, COMMD5, COMMD6, COMMD7, COMMD8, COMMD9, COMMD10, CCDC22 and CCDC93; within the complex forms a heterodimer with COMMD1. May form a homodimer with isoform 1. Interacts with RELA, RELB, NFKB1/p105. Does not interact with NFKBIB. Interacts with CCDC22, CCDC93, SCNN1B, CUL4A.

The protein resides in the nucleus. It is found in the cytoplasm. In terms of biological role, scaffold protein in the commander complex that is essential for endosomal recycling of transmembrane cargos; the commander complex is composed of the CCC subcomplex and the retriever subcomplex. May modulate activity of cullin-RING E3 ubiquitin ligase (CRL) complexes. Down-regulates activation of NF-kappa-B. Inhibits TNF-induced NFKB1 activation. This Bos taurus (Bovine) protein is COMM domain-containing protein 6 (COMMD6).